The primary structure comprises 309 residues: tRNA dimethylallyltransferase (309 aa).

10–17 (GPTAVGKT) is an ATP binding site. Residue 12 to 17 (TAVGKT) participates in substrate binding. The tract at residues 35-38 (DSMQ) is interaction with substrate tRNA.

It belongs to the IPP transferase family. As to quaternary structure, monomer. It depends on Mg(2+) as a cofactor.

It carries out the reaction adenosine(37) in tRNA + dimethylallyl diphosphate = N(6)-dimethylallyladenosine(37) in tRNA + diphosphate. Catalyzes the transfer of a dimethylallyl group onto the adenine at position 37 in tRNAs that read codons beginning with uridine, leading to the formation of N6-(dimethylallyl)adenosine (i(6)A). This chain is tRNA dimethylallyltransferase, found in Clostridium botulinum (strain Alaska E43 / Type E3).